The chain runs to 494 residues: Glutamyl-tRNA(Gln) amidotransferase subunit A (494 aa).

Active-site charge relay system residues include K78 and S158. Residue S182 is the Acyl-ester intermediate of the active site.

Belongs to the amidase family. GatA subfamily. In terms of assembly, heterotrimer of A, B and C subunits.

It carries out the reaction L-glutamyl-tRNA(Gln) + L-glutamine + ATP + H2O = L-glutaminyl-tRNA(Gln) + L-glutamate + ADP + phosphate + H(+). In terms of biological role, allows the formation of correctly charged Gln-tRNA(Gln) through the transamidation of misacylated Glu-tRNA(Gln) in organisms which lack glutaminyl-tRNA synthetase. The reaction takes place in the presence of glutamine and ATP through an activated gamma-phospho-Glu-tRNA(Gln). The chain is Glutamyl-tRNA(Gln) amidotransferase subunit A from Jannaschia sp. (strain CCS1).